The primary structure comprises 360 residues: UDP-3-O-acylglucosamine N-acyltransferase (360 aa).

His253 (proton acceptor) is an active-site residue.

Belongs to the transferase hexapeptide repeat family. LpxD subfamily. As to quaternary structure, homotrimer.

It catalyses the reaction a UDP-3-O-[(3R)-3-hydroxyacyl]-alpha-D-glucosamine + a (3R)-hydroxyacyl-[ACP] = a UDP-2-N,3-O-bis[(3R)-3-hydroxyacyl]-alpha-D-glucosamine + holo-[ACP] + H(+). It functions in the pathway bacterial outer membrane biogenesis; LPS lipid A biosynthesis. Catalyzes the N-acylation of UDP-3-O-acylglucosamine using 3-hydroxyacyl-ACP as the acyl donor. Is involved in the biosynthesis of lipid A, a phosphorylated glycolipid that anchors the lipopolysaccharide to the outer membrane of the cell. This Burkholderia multivorans (strain ATCC 17616 / 249) protein is UDP-3-O-acylglucosamine N-acyltransferase.